Reading from the N-terminus, the 511-residue chain is 2-isopropylmalate synthase (511 aa).

A Pyruvate carboxyltransferase domain is found at 6 to 269; the sequence is IIIFDTTLRD…YTDIKCENIF (264 aa). The Mn(2+) site is built by aspartate 15, histidine 203, histidine 205, and asparagine 239. A regulatory domain region spans residues 394–511; sequence VLEKLSVISG…SLKVEERKMA (118 aa).

It belongs to the alpha-IPM synthase/homocitrate synthase family. LeuA type 1 subfamily. In terms of assembly, homodimer. Requires Mn(2+) as cofactor.

It localises to the cytoplasm. It catalyses the reaction 3-methyl-2-oxobutanoate + acetyl-CoA + H2O = (2S)-2-isopropylmalate + CoA + H(+). Its pathway is amino-acid biosynthesis; L-leucine biosynthesis; L-leucine from 3-methyl-2-oxobutanoate: step 1/4. Catalyzes the condensation of the acetyl group of acetyl-CoA with 3-methyl-2-oxobutanoate (2-ketoisovalerate) to form 3-carboxy-3-hydroxy-4-methylpentanoate (2-isopropylmalate). The chain is 2-isopropylmalate synthase from Campylobacter jejuni subsp. jejuni serotype O:2 (strain ATCC 700819 / NCTC 11168).